The sequence spans 333 residues: Small ribosomal subunit protein uS2 (333 aa).

The protein belongs to the universal ribosomal protein uS2 family.

The sequence is that of Small ribosomal subunit protein uS2 from Azorhizobium caulinodans (strain ATCC 43989 / DSM 5975 / JCM 20966 / LMG 6465 / NBRC 14845 / NCIMB 13405 / ORS 571).